We begin with the raw amino-acid sequence, 270 residues long: Endonuclease 4 (270 aa).

Zn(2+) contacts are provided by H69, H108, E139, D169, H172, H204, D217, H219, and E248.

This sequence belongs to the AP endonuclease 2 family. The cofactor is Zn(2+).

It carries out the reaction Endonucleolytic cleavage to 5'-phosphooligonucleotide end-products.. Functionally, endonuclease IV plays a role in DNA repair. It cleaves phosphodiester bonds at apurinic or apyrimidinic (AP) sites, generating a 3'-hydroxyl group and a 5'-terminal sugar phosphate. In addition, possesses a 3'-5' exonuclease activity. The chain is Endonuclease 4 from Thermus thermophilus (strain ATCC BAA-163 / DSM 7039 / HB27).